A 399-amino-acid chain; its full sequence is MPIRYIDQLADLKDKKVFIRVDFNVPQDSKGNITEDTRITGALPTIRYAIEQGARVILASHLGRPKGEKNEKYSMVPAAKRLSELLGRKVKQASDCFGEEVTREIDAMKSGEVLMLENVRFYPGEEKNDPKFAQQLANGCQVYVNDAFAVSHRAHASVEAITRVIPTVVAGFLMRNEMTFFDKAMQNPVRPLVAILGGAKVSGKLEVLEKLMNKVDKVVIGGGMAFTFLKSMGYSVGASKVEDELLPTAKKIMDKARKKGIMFYLPVDCVVANAFEASATNFITTVQEIPEGWLALDIGPASATLFTETLRDAKTVIWNGPMGVFEMDAFARGTFAVAEAVASAFATTIIGGGDTDSAVRKAGVESKVSYISTGGGAFLELLEGKVLPGVKALDIKVKK.

Residues 22-24, Arg-38, 61-64, Arg-120, and Arg-153 contribute to the substrate site; these read DFN and HLGR. ATP is bound by residues Lys-204, Glu-326, and 352–355; that span reads GGDT.

It belongs to the phosphoglycerate kinase family. Monomer.

The protein localises to the cytoplasm. It catalyses the reaction (2R)-3-phosphoglycerate + ATP = (2R)-3-phospho-glyceroyl phosphate + ADP. It functions in the pathway carbohydrate degradation; glycolysis; pyruvate from D-glyceraldehyde 3-phosphate: step 2/5. This Pelobacter propionicus (strain DSM 2379 / NBRC 103807 / OttBd1) protein is Phosphoglycerate kinase.